A 634-amino-acid polypeptide reads, in one-letter code: tRNA uridine 5-carboxymethylaminomethyl modification enzyme MnmG (634 aa).

14–19 contributes to the FAD binding site; sequence GGGHAG. Residue 279-293 participates in NAD(+) binding; the sequence is GPRYCPSIEDKVVRF.

This sequence belongs to the MnmG family. As to quaternary structure, homodimer. Heterotetramer of two MnmE and two MnmG subunits. FAD serves as cofactor.

The protein resides in the cytoplasm. In terms of biological role, NAD-binding protein involved in the addition of a carboxymethylaminomethyl (cmnm) group at the wobble position (U34) of certain tRNAs, forming tRNA-cmnm(5)s(2)U34. This is tRNA uridine 5-carboxymethylaminomethyl modification enzyme MnmG from Xanthomonas campestris pv. campestris (strain 8004).